A 95-amino-acid polypeptide reads, in one-letter code: Large ribosomal subunit protein bL27 (95 aa).

Residues 1-10 (MLLTMNLQLF) constitute a propeptide that is removed on maturation. The disordered stretch occupies residues 12–38 (HKKGGGSTSNGRDSESKRLGAKSADGQ).

This sequence belongs to the bacterial ribosomal protein bL27 family. Post-translationally, the N-terminus is cleaved by ribosomal processing cysteine protease Prp.

The chain is Large ribosomal subunit protein bL27 from Enterococcus faecalis (strain ATCC 700802 / V583).